A 372-amino-acid polypeptide reads, in one-letter code: Flagellar P-ring protein (372 aa).

A signal peptide spans 1-26; sequence MNLSSLPFRLLAAAVALCAIAAPASA.

The protein belongs to the FlgI family. As to quaternary structure, the basal body constitutes a major portion of the flagellar organelle and consists of four rings (L,P,S, and M) mounted on a central rod.

The protein resides in the periplasm. The protein localises to the bacterial flagellum basal body. Functionally, assembles around the rod to form the L-ring and probably protects the motor/basal body from shearing forces during rotation. This is Flagellar P-ring protein from Xanthomonas axonopodis pv. citri (strain 306).